The chain runs to 387 residues: Chorismate synthase (387 aa).

2 residues coordinate NADP(+): R42 and R48. Residues 131–133, 251–252, G295, 310–314, and R336 each bind FMN; these read RSS, QA, and KPIPT.

This sequence belongs to the chorismate synthase family. Homotetramer. The cofactor is FMNH2.

It carries out the reaction 5-O-(1-carboxyvinyl)-3-phosphoshikimate = chorismate + phosphate. It participates in metabolic intermediate biosynthesis; chorismate biosynthesis; chorismate from D-erythrose 4-phosphate and phosphoenolpyruvate: step 7/7. Its function is as follows. Catalyzes the anti-1,4-elimination of the C-3 phosphate and the C-6 proR hydrogen from 5-enolpyruvylshikimate-3-phosphate (EPSP) to yield chorismate, which is the branch point compound that serves as the starting substrate for the three terminal pathways of aromatic amino acid biosynthesis. This reaction introduces a second double bond into the aromatic ring system. The chain is Chorismate synthase from Syntrophotalea carbinolica (strain DSM 2380 / NBRC 103641 / GraBd1) (Pelobacter carbinolicus).